The primary structure comprises 99 residues: Putative membrane protein insertion efficiency factor (99 aa).

It belongs to the UPF0161 family.

Its subcellular location is the cell inner membrane. Could be involved in insertion of integral membrane proteins into the membrane. This chain is Putative membrane protein insertion efficiency factor, found in Salinibacter ruber (strain DSM 13855 / M31).